A 464-amino-acid polypeptide reads, in one-letter code: MTNLKKRERAKTNASLISMVQRFSDITIMFAGLWLVCEVSGLSFLYMHLLVALITLVVFQMLGGITDFYRSWRGVRAATEFALLLQNWTLSVIFSAGLVAFNNDFDTQLKIWLAWYALTSIGLVVCRSCIRIGAGWLRNHGYNKRMVAVAGDLAAGQMLMESFRNQPWLGFEVVGVYHDPKPGGVSNDWAGNLQQLVEDAKAGKIHNVYIAMQMCDGARVKKLVHQLADTTCSVLLIPDVFTFNILHSRLEEMNGVPVVPLYDTPLSGVNRLLKRAEDIVLATLILLLISPVLCCIALAVKLSSPGPVIFRQTRYGMDGKPIKVWKFRSMKVMENDKVVTQATQNDPRVTKVGNFLRRTSLDELPQFINVLTGGMSIVGPRPHAVAHNEQYRQLIEGYMLRHKVKPGITGWAQINGWRGETDTLEKMEKRVEFDLEYIREWSVWFDIKIVFLTVFKGFVNKAAY.

Over 1–15 (MTNLKKRERAKTNAS) the chain is Cytoplasmic. The helical transmembrane segment at 16-36 (LISMVQRFSDITIMFAGLWLV) threads the bilayer. Topologically, residues 37-38 (CE) are periplasmic. A helical membrane pass occupies residues 39 to 59 (VSGLSFLYMHLLVALITLVVF). Residues 60-80 (QMLGGITDFYRSWRGVRAATE) are Cytoplasmic-facing. The chain crosses the membrane as a helical span at residues 81–101 (FALLLQNWTLSVIFSAGLVAF). Residues 102–104 (NND) lie on the Periplasmic side of the membrane. A helical transmembrane segment spans residues 105-125 (FDTQLKIWLAWYALTSIGLVV). The Cytoplasmic segment spans residues 126–278 (CRSCIRIGAG…VNRLLKRAED (153 aa)). Residues 279–299 (IVLATLILLLISPVLCCIALA) traverse the membrane as a helical segment. The Periplasmic segment spans residues 300–464 (VKLSSPGPVI…FKGFVNKAAY (165 aa)).

The protein belongs to the bacterial sugar transferase family.

It localises to the cell inner membrane. It carries out the reaction di-trans,octa-cis-undecaprenyl phosphate + UDP-alpha-D-glucose = alpha-D-glucosyl di-trans,octa-cis-undecaprenyl diphosphate + UMP. The protein operates within exopolysaccharide biosynthesis; colanic acid biosynthesis. Its function is as follows. Is the initiating enzyme for colanic acid (CA) synthesis. Catalyzes the transfer of the glucose-1-phosphate moiety from UDP-Glc onto the carrier lipid undecaprenyl phosphate (C55-P), forming a phosphoanhydride bond yielding to glucosyl-pyrophosphoryl-undecaprenol (Glc-PP-C55). Also possesses a weak galactose-1-P transferase activity. This chain is UDP-glucose:undecaprenyl-phosphate glucose-1-phosphate transferase (wcaJ), found in Escherichia coli (strain K12).